Here is a 59-residue protein sequence, read N- to C-terminus: Protein SspF (59 aa).

The protein belongs to the alpha/beta-type SASP family.

In terms of biological role, may play some important role in either sporulation or the dormant spore. The sequence is that of Protein SspF (sspF) from Bacillus cereus (strain ATCC 14579 / DSM 31 / CCUG 7414 / JCM 2152 / NBRC 15305 / NCIMB 9373 / NCTC 2599 / NRRL B-3711).